Consider the following 233-residue polypeptide: B-cell lymphoma/leukemia 10 (233 aa).

Met-1 is modified (N-acetylmethionine). The 89-residue stretch at Leu-13–Asp-101 folds into the CARD domain. Residues Lys-17, Lys-31, and Lys-63 each participate in a glycyl lysine isopeptide (Lys-Gly) (interchain with G-Cter in ubiquitin) cross-link. A compositionally biased stretch (polar residues) spans Thr-130–Ser-141. Disordered regions lie at residues Thr-130 to Pro-149 and Ser-186 to Gln-233. Ser-138 is subject to Phosphoserine. Residues Pro-195–Pro-205 show a composition bias toward pro residues.

Homomultimer; homooligomerized following recruitment by CARD domain-containing proteins that form a nucleating helical template that recruits BCL10 via CARD-CARD interaction. Self-associates by CARD-CARD interaction and interacts with other CARD-proteins such as CARD9, CARD10, CARD11 and CARD14. Forms a complex with CARD14 and MALT1; resulting in the formation of a CBM (CARD14-BCL10-MALT1) complex. Forms a complex with CARD11 and MALT1; resulting in the formation of a CBM (CARD11-BCL10-MALT1) complex. Forms a complex with CARD9 and MALT1; resulting in the formation of a CBM (CARD9-BCL10-MALT1) complex. Found in a membrane raft complex, at least composed of BCL10, CARD11, DPP4 and IKBKB. Binds caspase-9 with its C-terminal domain. Interacts with TRAF2 and BIRC2/c-IAP2. Interacts with PELI2 and SOCS3; these interactions may be mutually exclusive. Phosphorylated. Phosphorylation results in dissociation from TRAF2 and binding to BIRC2/c-IAP2. Phosphorylated by IKBKB/IKKB. Post-translationally, ubiquitinated via both 'Lys-63'-linked and linear ('Met-1'-linked) polyubiquitin chains in response to T-cell receptor (TCR) activation. Ubiquitination is recognized by IKBKG/NEMO, the regulatory subunit of I-kappa-B kinase (IKK), and is required for TCR-induced NF-kappa-B activation. Linear ubiquitination at Lys-17, Lys-31 and Lys-63 is mediated by RNF31/HOIP; linear ubiquitination is recognized with much higher affinity than 'Lys-63'-linked ubiquitin by IKBKG/NEMO. CARD11 is required for linear ubiquitination by HOIP by promoting the targeting of BCL10 to RNF31/HOIP. In terms of processing, proteolytically cleaved by MALT1; required for T-cell activation.

The protein localises to the cytoplasm. Its subcellular location is the perinuclear region. It localises to the membrane raft. Plays a key role in both adaptive and innate immune signaling by bridging CARD domain-containing proteins to immune activation. Acts by channeling adaptive and innate immune signaling downstream of CARD domain-containing proteins CARD9, CARD11 and CARD14 to activate NF-kappa-B and MAP kinase p38 (MAPK11, MAPK12, MAPK13 and/or MAPK14) pathways which stimulate expression of genes encoding pro-inflammatory cytokines and chemokines. Recruited by activated CARD domain-containing proteins: homooligomerized CARD domain-containing proteins form a nucleating helical template that recruits BCL10 via CARD-CARD interaction, thereby promoting polymerization of BCL10, subsequent recruitment of MALT1 and formation of a CBM complex. This leads to activation of NF-kappa-B and MAP kinase p38 (MAPK11, MAPK12, MAPK13 and/or MAPK14) pathways which stimulate expression of genes encoding pro-inflammatory cytokines and chemokines. Activated by CARD9 downstream of C-type lectin receptors; CARD9-mediated signals are essential for antifungal immunity. Activated by CARD11 downstream of T-cell receptor (TCR) and B-cell receptor (BCR). Promotes apoptosis, pro-caspase-9 maturation and activation of NF-kappa-B via NIK and IKK. The polypeptide is B-cell lymphoma/leukemia 10 (Rattus norvegicus (Rat)).